A 138-amino-acid polypeptide reads, in one-letter code: MAEKLKVELVTPYKKVLSEEVDEITATGALGEFGVLPGHAPFLTSLKIGELAYRKDGVSHHMALNWGYFEVENDTVTVLVETAEKADEIDLERAKAALGRAEVELKALTPEDKNFRIYEAALERALIRVQVAGKATRR.

Belongs to the ATPase epsilon chain family. As to quaternary structure, F-type ATPases have 2 components, CF(1) - the catalytic core - and CF(0) - the membrane proton channel. CF(1) has five subunits: alpha(3), beta(3), gamma(1), delta(1), epsilon(1). CF(0) has three main subunits: a, b and c.

The protein resides in the cell inner membrane. Its function is as follows. Produces ATP from ADP in the presence of a proton gradient across the membrane. The sequence is that of ATP synthase epsilon chain from Geobacter sp. (strain M21).